Consider the following 279-residue polypeptide: Pantothenate synthetase (279 aa).

Residue 26–33 (MGNLHDGH) coordinates ATP. The active-site Proton donor is the H33. Q57 is a binding site for (R)-pantoate. Q57 provides a ligand contact to beta-alanine. ATP is bound at residue 144–147 (GKKD). Q150 provides a ligand contact to (R)-pantoate. Residue 181–184 (LSSR) participates in ATP binding.

It belongs to the pantothenate synthetase family. In terms of assembly, homodimer.

The protein localises to the cytoplasm. The catalysed reaction is (R)-pantoate + beta-alanine + ATP = (R)-pantothenate + AMP + diphosphate + H(+). It participates in cofactor biosynthesis; (R)-pantothenate biosynthesis; (R)-pantothenate from (R)-pantoate and beta-alanine: step 1/1. Functionally, catalyzes the condensation of pantoate with beta-alanine in an ATP-dependent reaction via a pantoyl-adenylate intermediate. This Janthinobacterium sp. (strain Marseille) (Minibacterium massiliensis) protein is Pantothenate synthetase.